Reading from the N-terminus, the 637-residue chain is 1-deoxy-D-xylulose-5-phosphate synthase (637 aa).

Thiamine diphosphate is bound by residues His-71 and 112–114 (SHA). Asp-144 provides a ligand contact to Mg(2+). Thiamine diphosphate is bound by residues 145–146 (GA), Asn-173, Tyr-284, and Glu-365. Asn-173 contributes to the Mg(2+) binding site.

Belongs to the transketolase family. DXPS subfamily. In terms of assembly, homodimer. Mg(2+) serves as cofactor. It depends on thiamine diphosphate as a cofactor.

It carries out the reaction D-glyceraldehyde 3-phosphate + pyruvate + H(+) = 1-deoxy-D-xylulose 5-phosphate + CO2. The protein operates within metabolic intermediate biosynthesis; 1-deoxy-D-xylulose 5-phosphate biosynthesis; 1-deoxy-D-xylulose 5-phosphate from D-glyceraldehyde 3-phosphate and pyruvate: step 1/1. Catalyzes the acyloin condensation reaction between C atoms 2 and 3 of pyruvate and glyceraldehyde 3-phosphate to yield 1-deoxy-D-xylulose-5-phosphate (DXP). The protein is 1-deoxy-D-xylulose-5-phosphate synthase of Mycobacterium ulcerans (strain Agy99).